The following is a 459-amino-acid chain: NADH-ubiquinone oxidoreductase chain 4 (459 aa).

The next 13 helical transmembrane spans lie at 22 to 42, 60 to 80, 94 to 112, 113 to 133, 145 to 165, 196 to 216, 224 to 244, 257 to 277, 284 to 303, 308 to 330, 351 to 371, 391 to 411, and 435 to 455; these read MIWI…LLFF, PLTT…IMAS, LYLS…TFTA, TELI…LVII, AGTY…IALI, WLAY…HLWL, PIAG…YGMM, MAYP…SISL, SLIA…AILI, SFTG…FCLA, LLPL…ALPP, TTLL…LYMF, and ILMF…DIIT.

This sequence belongs to the complex I subunit 4 family. As to quaternary structure, core subunit of respiratory chain NADH dehydrogenase (Complex I) which is composed of 45 different subunits.

The protein resides in the mitochondrion inner membrane. The enzyme catalyses a ubiquinone + NADH + 5 H(+)(in) = a ubiquinol + NAD(+) + 4 H(+)(out). Core subunit of the mitochondrial membrane respiratory chain NADH dehydrogenase (Complex I) which catalyzes electron transfer from NADH through the respiratory chain, using ubiquinone as an electron acceptor. Essential for the catalytic activity and assembly of complex I. In Gorilla gorilla gorilla (Western lowland gorilla), this protein is NADH-ubiquinone oxidoreductase chain 4 (MT-ND4).